Consider the following 312-residue polypeptide: Olfactory receptor 6Z7 (312 aa).

Residues methionine 1 to aspartate 29 are Extracellular-facing. An N-linked (GlcNAc...) asparagine glycan is attached at asparagine 9. Residues alanine 30–isoleucine 50 traverse the membrane as a helical segment. At tyrosine 51–asparagine 69 the chain is on the cytoplasmic side. A helical transmembrane segment spans residues leucine 70–tryptophan 90. Residue asparagine 91 is a topological domain, extracellular. A helical membrane pass occupies residues glycine 92 to valine 112. Cysteine 101 and cysteine 193 are oxidised to a cystine. The Cytoplasmic portion of the chain corresponds to glycine 113 to arginine 141. Residues proline 142 to isoleucine 162 form a helical membrane-spanning segment. Residues lysine 163–histidine 195 lie on the Extracellular side of the membrane. Asparagine 190 carries N-linked (GlcNAc...) asparagine glycosylation. The helical transmembrane segment at valine 196 to leucine 216 threads the bilayer. The Cytoplasmic segment spans residues threonine 217–alanine 241. Residues phenylalanine 242–isoleucine 262 form a helical membrane-spanning segment. At tyrosine 263–asparagine 275 the chain is on the extracellular side. The helical transmembrane segment at lysine 276–leucine 296 threads the bilayer. Topologically, residues arginine 297–serine 312 are cytoplasmic.

It belongs to the G-protein coupled receptor 1 family.

It localises to the cell membrane. Functionally, odorant receptor. This chain is Olfactory receptor 6Z7, found in Mus musculus (Mouse).